An 802-amino-acid chain; its full sequence is MAATRVQPSTREIFTTLEYGPVPESHACALAWLDTHNRLLGHHVNGMWLKPEHRNPAPCQDPITGENLASCLQAEAEDIAAAVEAAKIAFKAWSQLPGAARGQHLTRLAKVVQKHQRLLWTLESLVTGRAVREVRDGDVPLAQQLLQYHAVQAHAQGDALADWQPVGVIGLILPTPFSFLDMMWRVCPALAMGCTVVALVPPAFPTPLLLAQLAGELGSFPGILNVVCGPASLGPVLASQPGVQKVAFCGAVEEGRVLRRTLAGRGAELGLALGTESLLLLTDSADVDSAVEGVVDAVWSDRSLGGLRLLIQESVWDEAMRRLQARMAQIRSGRGLDGAVDMGARGAAARDLAQSFVDEAQSQGGQVFQAGDVPSSSPFFSPALVSGLPPAAPCAQAEVPWPVVMASPFRTVKEALALANGTPRGGSASVWSERLGQALELGYGLQVGTVWINAHGLRDPAVPTGGCKESGSSWHGGPDGLYEYLQPLGTPSQESFLCENINYDTFGLAASSILPSGPETGPSPAPPYGLFVGGRFQSPGTQSSRPIQDSSGKVSSYVAEGGAKDIRGAVEAAHQAAPGWGAQSPRARAGLLWALAAALERRKPVLTSQLERHGAAPTVAKTEVELSVRRLQTWGTRVQDQGQTLQVTGLRGPVLRLREPLGVLAVVCPDEWPLLAFVSLLAPALAHGNAVVLVPSGACPLLALEVCQDIAPLFPAGLVSVVTGDRDHLTRCLALHQDVQALWYFGSAQGSQFVEWASAGNLKSVWVNRGFPRAWDVEVQGAGQELSLHAARTKALWLPMGD.

It belongs to the aldehyde dehydrogenase family. As to quaternary structure, interacts with SPG21.

The sequence is that of Aldehyde dehydrogenase family 16 member A1 (Aldh16a1) from Mus musculus (Mouse).